We begin with the raw amino-acid sequence, 330 residues long: Autoinducer 2 import system permease protein LsrD (330 aa).

The Cytoplasmic portion of the chain corresponds to 1-4 (MRIR). Residues 5 to 25 (YGWELALAALLVIEIVAFGAI) traverse the membrane as a helical segment. Residues 26 to 42 (NPRMLDLNMLLFSTSDF) lie on the Periplasmic side of the membrane. Residues 43-63 (ICIGIVALPLTMVIVSGGIDI) form a helical membrane-spanning segment. At 64-67 (SFGS) the chain is on the cytoplasmic side. The next 2 membrane-spanning stretches (helical) occupy residues 68 to 88 (TIGL…PMPL) and 89 to 109 (AILL…GLII). Topologically, residues 110–115 (YTKVNP) are cytoplasmic. The helical transmembrane segment at 116-136 (LVITLGTLYLFAGSALLLSGM) threads the bilayer. Over 137–159 (AGATGYEGIGGFPMAFTDFANLD) the chain is Periplasmic. The chain crosses the membrane as a helical span at residues 160-180 (VLGLPVPLIIFLICLLVFWLW). Residues 181-209 (LHKTHAGRNVFLIGQSPRVAVYSAIPVNR) lie on the Cytoplasmic side of the membrane. Residues 210–230 (TLCALYAMTGLASAVAAVLLV) form a helical membrane-spanning segment. Residues 231–237 (SYFGSAR) are Periplasmic-facing. Helical transmembrane passes span 238–258 (SDLG…GGAN) and 259–279 (IYGG…VGYL). The Periplasmic portion of the chain corresponds to 280–285 (QQGLQM). The helical transmembrane segment at 286–306 (AGVPNQVSSALSGALLIVVVV) threads the bilayer. Residues 307 to 330 (GRSVSLHRQQIKEWLARRANNPLP) lie on the Cytoplasmic side of the membrane.

Belongs to the binding-protein-dependent transport system permease family. AraH/RbsC subfamily. As to quaternary structure, the complex is composed of two ATP-binding proteins (LsrA), two transmembrane proteins (LsrC and LsrD) and a solute-binding protein (LsrB).

The protein resides in the cell inner membrane. Functionally, part of the ABC transporter complex LsrABCD involved in autoinducer 2 (AI-2) import. Probably responsible for the translocation of the substrate across the membrane. The sequence is that of Autoinducer 2 import system permease protein LsrD (lsrD) from Escherichia coli (strain SMS-3-5 / SECEC).